Here is a 224-residue protein sequence, read N- to C-terminus: UPF0758 protein PD_0117 (224 aa).

One can recognise an MPN domain in the interval 102–224; the sequence is SIHDPISAGR…PVSFAEHGWL (123 aa). 3 residues coordinate Zn(2+): His173, His175, and Asp186. The JAMM motif motif lies at 173–186; the sequence is HNHPSGNREPSPAD.

This sequence belongs to the UPF0758 family.

In Xylella fastidiosa (strain Temecula1 / ATCC 700964), this protein is UPF0758 protein PD_0117.